Reading from the N-terminus, the 82-residue chain is Protein costars (82 aa).

It belongs to the costars family.

Functionally, modulates actin dynamics and cell motility. The chain is Protein costars (cosA) from Dictyostelium discoideum (Social amoeba).